We begin with the raw amino-acid sequence, 238 residues long: N-acetylneuraminic acid outer membrane channel protein NanC (238 aa).

Positions 1-23 (MKKAKILSGVLLLCFSSPLISQA) are cleaved as a signal peptide. Residues 24–25 (AT) are Periplasmic-facing. A membrane pass occupies residues 26 to 32 (LDVRGGY). Residues 33–39 (RSGSHAY) are Extracellular-facing. A membrane pass occupies residues 40–49 (ETRLKVSEGW). Topologically, residues 50–52 (QNG) are periplasmic. Residues 53–61 (WWASMESNT) are membrane-embedded. Over 62–76 (WNTIHDNKKENAALN) the chain is Extracellular. Residues 77 to 86 (DVQVEVNYAI) are membrane-embedded. The Periplasmic segment spans residues 87 to 91 (KLDDQ). The segment at 92 to 102 (WTVRPGMLTHF) is a transmembrane helix. Residues 103 to 107 (SSNGT) are Extracellular-facing. The chain crosses the lipid bilayer at residues 108 to 117 (RYGPYVKLSW). Residues 118–122 (DATKD) lie on the Periplasmic side of the membrane. Residues 123-132 (LNFGIRYRYD) are membrane-embedded. Topologically, residues 133–151 (WKAYRQQDLSGDMSRDNVH) are extracellular. A membrane pass occupies residues 152 to 159 (RWDGYVTY). Residues 160–164 (HINSD) lie on the Periplasmic side of the membrane. A transmembrane helix spans residues 165–173 (FTFAWQTTL). Topologically, residues 174–190 (YSKQNDYRYANHKKWAT) are extracellular. The segment at 191–200 (ENAFVLQYHM) is a transmembrane helix. The Periplasmic segment spans residues 201–203 (TPD). Positions 204–212 (ITPYIEYDY) form a transmembrane segment. Residues 213-228 (LDRQGVYNGRDNLSEN) lie on the Extracellular side of the membrane. The chain crosses the lipid bilayer at residues 229 to 236 (SYRIGVSF). Over 237–238 (KL) the chain is Periplasmic.

This sequence belongs to the oligogalacturonate-specific porin KdgM (TC 1.B.35) family. NanC subfamily. Monomer.

It is found in the cell outer membrane. The catalysed reaction is N-acetylneuraminate(in) = N-acetylneuraminate(out). In terms of biological role, outer membrane channel protein allowing the entry of N-acetylneuraminic acid (Neu5Ac, the most abundant sialic acid on host cell surfaces) into the bacteria. NanC proteins form high-conductance channels which are open at low membrane potentials and which have a weak anion selectivity. This chain is N-acetylneuraminic acid outer membrane channel protein NanC (nanC), found in Escherichia coli O157:H7.